Here is a 163-residue protein sequence, read N- to C-terminus: Biotin carboxyl carrier protein of acetyl-CoA carboxylase (163 aa).

Positions 85-161 (GDFIVSPLVG…QFGSKLFRIV (77 aa)) constitute a Biotinyl-binding domain. The residue at position 127 (Lys-127) is an N6-biotinyllysine.

As to quaternary structure, homodimer.

The protein operates within lipid metabolism; fatty acid biosynthesis. Functionally, this protein is a component of the acetyl coenzyme A carboxylase complex; first, biotin carboxylase catalyzes the carboxylation of the carrier protein and then the transcarboxylase transfers the carboxyl group to form malonyl-CoA. In Chlamydia muridarum (strain MoPn / Nigg), this protein is Biotin carboxyl carrier protein of acetyl-CoA carboxylase (accB).